The sequence spans 509 residues: MTLQGKPYRLSDLIKQTGVRLTDCSNQFSDRFVSGITQIAQSVERDDIFVAFQGKTRHGVEFLDQVQSCAAVLTDNKGRHIMQSDCLPTRSTPILVTDSPRSDLIVLAKRVYPIDDIRIFGITGTNGKTSTMHIAAKLLEMMGISCGISTTIGSSASESDSCLTTPELCQLYARIFTAKQARADFFALEASSHAINRGRLGDIVLEVAAFTNLTPEHMEEHKNMEAYYQAKKALFLNKRSNSAVINIDTPYGIRLFKETGCSASVISENTKYGLDHKLFWQASVRRVGLSFGFTLISPSGYRVESSISLLGKAFALNTCMAIVILCNLGIDIERIDSVLRKAGGLKMVLPGRMEVFQTGNSPRVIVDHGHTVDAVETALVAAKSITRGRLITIINADGQRDPSKRKHLGQLCGAYSDKLFITDGHSRFENPAEIRRMILDGVEGPRRQVEQIPSMTQAVLAAIDIARSDDTVLCSGFGDDPYLDVLGKKIPYSLRDEVRRGLERFAQGT.

An ATP-binding site is contributed by 124–130; sequence GTNGKTS. UDP-N-acetyl-alpha-D-muramoyl-L-alanyl-D-glutamate contacts are provided by residues 164-165, S191, and R199; that span reads TT. K231 carries the post-translational modification N6-carboxylysine.

This sequence belongs to the MurCDEF family. MurE subfamily. In terms of processing, carboxylation is probably crucial for Mg(2+) binding and, consequently, for the gamma-phosphate positioning of ATP.

Its subcellular location is the cytoplasm. The protein operates within cell wall biogenesis; peptidoglycan biosynthesis. Functionally, catalyzes the addition of an amino acid to the nucleotide precursor UDP-N-acetylmuramoyl-L-alanyl-D-glutamate (UMAG) in the biosynthesis of bacterial cell-wall peptidoglycan. In Tropheryma whipplei (strain Twist) (Whipple's bacillus), this protein is UDP-N-acetylmuramyl-tripeptide synthetase.